Reading from the N-terminus, the 168-residue chain is Plasma membrane-associated cation-binding protein 2 (168 aa).

The N-myristoyl glycine moiety is linked to residue glycine 2. Repeat copies occupy residues valine 26–lysine 30, valine 69–lysine 73, valine 94–lysine 99, valine 103–lysine 107, valine 110–lysine 115, valine 118–lysine 122, and valine 124–lysine 129. The interval valine 26–lysine 129 is 7 X 5 AA approximate repeats of V-E-E-K-K. A coiled-coil region spans residues glutamate 56–lysine 77. Residues glutamate 88–valine 131 show a composition bias toward basic and acidic residues. A disordered region spans residues glutamate 88–alanine 168. Residues glutamate 152–alanine 168 are compositionally biased toward low complexity.

This sequence belongs to the DREPP family. In terms of assembly, binds microtubules. Interacts with calcium ion Ca(2+), calmodulin and some phosphatidylinositol phosphates (PtdInsPs) such as phosphatidylinositol 3,5-bisphosphate [PtdIns(3,5)P(2)], PtdIns(4,5)P(2) and PtdIns(3,4,5)P(3). Cu(2+) is required as a cofactor. Mostly expressed in the expanding cells, specifically in roots (except in root tips) and flowers (at protein level). Also detected in cotyledons, hypocotyls and trichome stalks.

It is found in the cell membrane. The protein localises to the cytoplasm. The protein resides in the cytoskeleton. May be involved in intracellular signaling through interaction with PtdInsPs and calmodulin (CaM); may keep PtdInsPs attached to the plasma membrane until Ca(2+)-CaM reaches a competitive concentration subsequent to an increase triggered by a stimulus, thus leading to PtdInsPs release and subsequent activation of InsPs-dependent signaling cascade. Binds to microtubules and inhibits tubulin polymerization. Regulates directional cell growth and cortical microtubule organization by destabilizing microtubules (e.g. in cotyledon pavement cells). The protein is Plasma membrane-associated cation-binding protein 2 of Arabidopsis thaliana (Mouse-ear cress).